An 89-amino-acid polypeptide reads, in one-letter code: Acylphosphatase (89 aa).

Positions 3 to 89 constitute an Acylphosphatase-like domain; the sequence is RMTAWVHGFV…RGDLTGFVER (87 aa). Catalysis depends on residues arginine 18 and asparagine 36.

The protein belongs to the acylphosphatase family.

The catalysed reaction is an acyl phosphate + H2O = a carboxylate + phosphate + H(+). The polypeptide is Acylphosphatase (acyP) (Rhodococcus jostii (strain RHA1)).